The sequence spans 59 residues: Large ribosomal subunit protein bL32 (59 aa).

Basic residues predominate over residues 1 to 16 (MAVPKRKTSPSKRGMR). Residues 1 to 41 (MAVPKRKTSPSKRGMRRSADALKAPTYIEDKNSGELRRPHH) are disordered. Over residues 28–41 (IEDKNSGELRRPHH) the composition is skewed to basic and acidic residues.

This sequence belongs to the bacterial ribosomal protein bL32 family.

The polypeptide is Large ribosomal subunit protein bL32 (Bartonella henselae (strain ATCC 49882 / DSM 28221 / CCUG 30454 / Houston 1) (Rochalimaea henselae)).